The following is a 107-amino-acid chain: UPF0102 protein Tlet_0667 (107 aa).

Belongs to the UPF0102 family.

The polypeptide is UPF0102 protein Tlet_0667 (Pseudothermotoga lettingae (strain ATCC BAA-301 / DSM 14385 / NBRC 107922 / TMO) (Thermotoga lettingae)).